Reading from the N-terminus, the 222-residue chain is Kinetochore protein Spc25 (222 aa).

A coiled-coil region spans residues 51–86 (RHQRKVGKLQKVLMERREELDKRVSFIEELDRELEA).

The protein belongs to the SPC25 family. In terms of assembly, component of the Ndc80 complex, which is composed of Ndc80, Nuf2 and Spc25.

Its subcellular location is the nucleus. The protein resides in the chromosome. It localises to the centromere. The protein localises to the kinetochore. In terms of biological role, acts as a component of the essential kinetochore-associated Ndc80 complex, which is required for chromosome segregation and spindle checkpoint activity during meiosis and mitosis. Required for kinetochore integrity and the organization of stable microtubule binding sites in the outer plate of the kinetochore. Participates in SAC signaling that responds specifically to disruptions in spindle microtubule dynamics. The NDC80 complex synergistically enhances the affinity of the SKA1 complex for microtubules and may allow the NDC80 complex to track depolymerizing microtubules. This chain is Kinetochore protein Spc25, found in Drosophila mauritiana (Fruit fly).